The chain runs to 268 residues: Tryptophan synthase alpha chain (268 aa).

Catalysis depends on proton acceptor residues Glu47 and Asp58.

It belongs to the TrpA family. As to quaternary structure, tetramer of two alpha and two beta chains.

It catalyses the reaction (1S,2R)-1-C-(indol-3-yl)glycerol 3-phosphate + L-serine = D-glyceraldehyde 3-phosphate + L-tryptophan + H2O. Its pathway is amino-acid biosynthesis; L-tryptophan biosynthesis; L-tryptophan from chorismate: step 5/5. Functionally, the alpha subunit is responsible for the aldol cleavage of indoleglycerol phosphate to indole and glyceraldehyde 3-phosphate. The polypeptide is Tryptophan synthase alpha chain (Chlorobium phaeobacteroides (strain BS1)).